Consider the following 206-residue polypeptide: Homoserine/homoserine lactone efflux protein (206 aa).

6 consecutive transmembrane segments (helical) span residues 5–25, 45–65, 68–88, 117–137, 148–168, and 182–202; these read WWFAYLLTSTLLSLSPGSGAI, GLQTGLGIHIVLVGVGLGTLF, SLIAFEILKWAGAAYLIWLGI, FVNLTNPKSIVFLAALFPQFI, LILGVTTIVVDMIVMTGYATL, and MKALNKAFGSLFMLVGALLAS.

It belongs to the Rht family.

The protein resides in the cell membrane. Conducts the efflux of homoserine and homoserine lactone. This Salmonella typhi protein is Homoserine/homoserine lactone efflux protein (rhtB).